We begin with the raw amino-acid sequence, 137 residues long: Large ribosomal subunit protein bL17 (137 aa).

This sequence belongs to the bacterial ribosomal protein bL17 family. Part of the 50S ribosomal subunit. Contacts protein L32.

The sequence is that of Large ribosomal subunit protein bL17 from Caulobacter sp. (strain K31).